The following is a 576-amino-acid chain: RNA-directed RNA polymerase subunit beta (576 aa).

The 133-residue stretch at 259-391 folds into the RdRp catalytic domain; that stretch reads RLARDGSLLN…PNRKKTFCDG (133 aa). Residues D274, D359, and D360 each coordinate Mg(2+).

As to quaternary structure, homodimer; the replicase complex can dimerize. Part of the viral RNA-dependent RNA polymerase complex, the other subunits are the host ribosomal protein S1, EF-Tu and EF-Ts. S1 is needed for the initiation of genomic RNA (+)-strand replication. It depends on Mg(2+) as a cofactor.

The catalysed reaction is RNA(n) + a ribonucleoside 5'-triphosphate = RNA(n+1) + diphosphate. This is the catalytic subunit of the viral RNA-dependent RNA polymerase complex. This complex is involved in viral RNA replication that produces (+)-stranded genomes via a complementary, (-)-stranded intermediate. Binds RNA cooperatively with the host ribosomal protein S1. This Enterobacteria phage SP (Bacteriophage SP) protein is RNA-directed RNA polymerase subunit beta.